The sequence spans 248 residues: Probable transcriptional regulatory protein MYPE8020 (248 aa).

The protein belongs to the TACO1 family.

The protein localises to the cytoplasm. This is Probable transcriptional regulatory protein MYPE8020 from Malacoplasma penetrans (strain HF-2) (Mycoplasma penetrans).